Consider the following 513-residue polypeptide: ATP synthase subunit alpha (513 aa).

169–176 (GDRQIGKT) is an ATP binding site.

This sequence belongs to the ATPase alpha/beta chains family. As to quaternary structure, F-type ATPases have 2 components, CF(1) - the catalytic core - and CF(0) - the membrane proton channel. CF(1) has five subunits: alpha(3), beta(3), gamma(1), delta(1), epsilon(1). CF(0) has three main subunits: a(1), b(2) and c(9-12). The alpha and beta chains form an alternating ring which encloses part of the gamma chain. CF(1) is attached to CF(0) by a central stalk formed by the gamma and epsilon chains, while a peripheral stalk is formed by the delta and b chains.

The protein localises to the cell inner membrane. The enzyme catalyses ATP + H2O + 4 H(+)(in) = ADP + phosphate + 5 H(+)(out). Produces ATP from ADP in the presence of a proton gradient across the membrane. The alpha chain is a regulatory subunit. The protein is ATP synthase subunit alpha of Shewanella sediminis (strain HAW-EB3).